The primary structure comprises 95 residues: MTDTIGAGQPGQDAFPPVEELSYEQARDELIETVKILELGQMGLDESLKYWERGEALAKACEAHLDGASKRVEEALRKNAEGTDSAAHNEEAGED.

This sequence belongs to the XseB family. In terms of assembly, heterooligomer composed of large and small subunits.

Its subcellular location is the cytoplasm. It catalyses the reaction Exonucleolytic cleavage in either 5'- to 3'- or 3'- to 5'-direction to yield nucleoside 5'-phosphates.. Its function is as follows. Bidirectionally degrades single-stranded DNA into large acid-insoluble oligonucleotides, which are then degraded further into small acid-soluble oligonucleotides. The polypeptide is Exodeoxyribonuclease 7 small subunit (Corynebacterium aurimucosum (strain ATCC 700975 / DSM 44827 / CIP 107346 / CN-1) (Corynebacterium nigricans)).